A 72-amino-acid chain; its full sequence is UPF0154 protein BH2350 (72 aa).

Residues 3 to 23 (WMILLWITLGIVIGIAIGFFI) traverse the membrane as a helical segment.

The protein belongs to the UPF0154 family.

The protein resides in the membrane. This chain is UPF0154 protein BH2350, found in Halalkalibacterium halodurans (strain ATCC BAA-125 / DSM 18197 / FERM 7344 / JCM 9153 / C-125) (Bacillus halodurans).